Here is a 473-residue protein sequence, read N- to C-terminus: 3-isopropylmalate dehydratase large subunit (473 aa).

Residues Cys-354, Cys-414, and Cys-417 each contribute to the [4Fe-4S] cluster site. A disordered region spans residues Leu-425–Arg-448.

It belongs to the aconitase/IPM isomerase family. LeuC type 1 subfamily. In terms of assembly, heterodimer of LeuC and LeuD. [4Fe-4S] cluster serves as cofactor.

The catalysed reaction is (2R,3S)-3-isopropylmalate = (2S)-2-isopropylmalate. The protein operates within amino-acid biosynthesis; L-leucine biosynthesis; L-leucine from 3-methyl-2-oxobutanoate: step 2/4. Its function is as follows. Catalyzes the isomerization between 2-isopropylmalate and 3-isopropylmalate, via the formation of 2-isopropylmaleate. This is 3-isopropylmalate dehydratase large subunit from Acidothermus cellulolyticus (strain ATCC 43068 / DSM 8971 / 11B).